A 464-amino-acid polypeptide reads, in one-letter code: Fumarate hydratase class II (464 aa).

Substrate is bound by residues 96-98 (SGT), 127-130 (HPND), 137-139 (SSN), and threonine 185. Histidine 186 acts as the Proton donor/acceptor in catalysis. Serine 316 is an active-site residue. Residues serine 317 and 322 to 324 (KVN) contribute to the substrate site.

Belongs to the class-II fumarase/aspartase family. Fumarase subfamily. As to quaternary structure, homotetramer.

It is found in the cytoplasm. The enzyme catalyses (S)-malate = fumarate + H2O. Its pathway is carbohydrate metabolism; tricarboxylic acid cycle; (S)-malate from fumarate: step 1/1. Functionally, involved in the TCA cycle. Catalyzes the stereospecific interconversion of fumarate to L-malate. This chain is Fumarate hydratase class II, found in Pseudomonas syringae pv. tomato (strain ATCC BAA-871 / DC3000).